Consider the following 376-residue polypeptide: General transcription factor IIH subunit 2 (376 aa).

A VWFA domain is found at 64–206; the sequence is HVMIVIDCSR…NIRCSAIGLS (143 aa). Residues 286 to 303 form a C4-type zinc finger; sequence CTQCGARHCSIPAECPVC.

The protein belongs to the GTF2H2 family. As to quaternary structure, component of the 7-subunit TFIIH core complex composed of xpb-1, xpd-1, gtf-2H1, gtf-2H2C, gtf-2H3, Y73F8A.24 and gtf-2H5, which is active in NER. The core complex associates with the 3-subunit CDK-activating kinase (CAK) module composed of cyh-1, cdk-7 and mnat-1 to form the 10-subunit holoenzyme (holo-TFIIH) active in transcription.

It localises to the nucleus. Component of the general transcription and DNA repair factor IIH (TFIIH) core complex, which is involved in general and transcription-coupled nucleotide excision repair (NER) of damaged DNA and, when complexed to CAK, in RNA transcription by RNA polymerase II. In NER, TFIIH acts by opening DNA around the lesion to allow the excision of the damaged oligonucleotide and its replacement by a new DNA fragment. In transcription, TFIIH has an essential role in transcription initiation. When the pre-initiation complex (PIC) has been established, TFIIH is required for promoter opening and promoter escape. Phosphorylation of the C-terminal tail (CTD) of the largest subunit of RNA polymerase II by the kinase module CAK controls the initiation of transcription. This Caenorhabditis elegans protein is General transcription factor IIH subunit 2.